The primary structure comprises 372 residues: MTLYCKRGYKGYLYLEDGTLIEGCGFGAKGIRAGEVVFTTSMNGYPESLTDPSYRGQILVITHPLVGNYGVPEKQRVEGILTNFESEQIQVEGLVVSEETDPFKWNSSKSLHEWLLSEGVPGLSDVDTRSIVKKVRSRGVMMGVIASGYEIEDPKKFLEKKYDEIDFTQFTSPKAPIVHLGNTGETIVVVDCGVKHGILYQLHQRGFTIVRVPCKFNVSKIMDYYPKGVVFGNGPGNPNLLQEVIENFKELTEYKIPILGICLGHQVATLAMGGKVNKMKFGHRAINKPVIDISSNKCYITTHNHGYGILSKEDLPPNSKLWFINPDDGTIEGWIHEKLPIITTQFHPEARPGPWDVTWVFDKFKKMVSRNA.

The interval 1 to 182 (MTLYCKRGYK…PKAPIVHLGN (182 aa)) is CPSase. Residues Ser53, Gly234, and Gly236 each contribute to the L-glutamine site. One can recognise a Glutamine amidotransferase type-1 domain in the interval 186 to 372 (TIVVVDCGVK…KFKKMVSRNA (187 aa)). The active-site Nucleophile is Cys262. L-glutamine contacts are provided by Leu263, Gln266, Asn304, Gly306, and Tyr307. Catalysis depends on residues His347 and Glu349.

This sequence belongs to the CarA family. Composed of two chains; the small (or glutamine) chain promotes the hydrolysis of glutamine to ammonia, which is used by the large (or ammonia) chain to synthesize carbamoyl phosphate. Tetramer of heterodimers (alpha,beta)4.

The catalysed reaction is hydrogencarbonate + L-glutamine + 2 ATP + H2O = carbamoyl phosphate + L-glutamate + 2 ADP + phosphate + 2 H(+). It catalyses the reaction L-glutamine + H2O = L-glutamate + NH4(+). Its pathway is amino-acid biosynthesis; L-arginine biosynthesis; carbamoyl phosphate from bicarbonate: step 1/1. It functions in the pathway pyrimidine metabolism; UMP biosynthesis via de novo pathway; (S)-dihydroorotate from bicarbonate: step 1/3. Functionally, small subunit of the glutamine-dependent carbamoyl phosphate synthetase (CPSase). CPSase catalyzes the formation of carbamoyl phosphate from the ammonia moiety of glutamine, carbonate, and phosphate donated by ATP, constituting the first step of 2 biosynthetic pathways, one leading to arginine and/or urea and the other to pyrimidine nucleotides. The small subunit (glutamine amidotransferase) binds and cleaves glutamine to supply the large subunit with the substrate ammonia. This chain is Carbamoyl phosphate synthase small chain, found in Sulfurisphaera tokodaii (strain DSM 16993 / JCM 10545 / NBRC 100140 / 7) (Sulfolobus tokodaii).